We begin with the raw amino-acid sequence, 71 residues long: Heat-stable enterotoxin B (71 aa).

Residues 1 to 19 form the signal peptide; sequence MKKIILALVLMLFSFCTLG. The propeptide occupies 20-52; it reads QETASMHLDDTLSAPIAAEINRKACDTQTPSPS. 3 cysteine pairs are disulfide-bonded: cysteine 59/cysteine 64, cysteine 60/cysteine 68, and cysteine 63/cysteine 71.

The protein belongs to the heat-stable enterotoxin family.

It is found in the secreted. Toxin which activates the particulate form of guanylate cyclase and increases cyclic GMP levels within the host intestinal epithelial cells. Could play an important role in pathogenesis. The chain is Heat-stable enterotoxin B (ystB) from Yersinia enterocolitica.